A 999-amino-acid polypeptide reads, in one-letter code: Protein Smaug (999 aa).

Over residues 1-36 the composition is skewed to polar residues; the sequence is MKYATGTDNAMTSGISGQTNNSNSASNEMQPTTSTP. 2 disordered regions span residues 1–69 and 329–349; these read MKYA…QSQP and LCPA…IAPP. 2 stretches are compositionally biased toward low complexity: residues 44–69 and 329–338; these read TSTA…QSQP and LCPASGSRSS. Phosphoserine is present on residues S564 and S575. Residues 583-763 form an interaction with cup region; that stretch reads EFKPNYIKFH…KDLKFKLSKM (181 aa). Residues 600–654 form the SAM domain; it reads GIGLWLKSLRLHKYIELFKNMTYEEMLLITEDFLQSVGVTKGASHKLALCIDKLK. 2 disordered regions span residues 773–892 and 955–977; these read HVKP…MQQM and QQSQ…EQQP. Composition is skewed to polar residues over residues 801–822 and 854–864; these read KNGS…NFSL and HQPQYKSSSYP. S972 carries the phosphoserine modification.

The protein belongs to the SMAUG family. Interacts with oskar (osk). Binds to the 3'-UTR of nanos (nos). Interacts with cup, which in turn recruits eIF4-E, leading to an indirect interaction between smg and eIF4-E that prevents mRNA translation. Forms a complex with aub, twin, AGO3, nanos mRNA and piRNAs that targets the nanos 3'-untranslated region, in early embryos. In terms of tissue distribution, at syncytial blastoderm, it is located throughout the bulk cytoplasm and pole plasm. By the time of cellularization, it concentrates at the posterior pole.

It localises to the cytoplasm. Translation regulator that binds to the 3'-UTR of specific mRNAs such as nanos (nos) and prevents their translation. Prevents translation of unlocalized nanos in the bulk cytoplasm via the recruitment of cup. The sequence is that of Protein Smaug (smg) from Drosophila melanogaster (Fruit fly).